Here is a 257-residue protein sequence, read N- to C-terminus: Probable enoyl-CoA hydratase echA8 (257 aa).

The protein belongs to the enoyl-CoA hydratase/isomerase family.

It catalyses the reaction a (3S)-3-hydroxyacyl-CoA = a (2E)-enoyl-CoA + H2O. It carries out the reaction a 4-saturated-(3S)-3-hydroxyacyl-CoA = a (3E)-enoyl-CoA + H2O. Its function is as follows. Could possibly oxidize fatty acids using specific components. The chain is Probable enoyl-CoA hydratase echA8 (echA8) from Mycobacterium leprae (strain TN).